The chain runs to 660 residues: MKAIVFAYHDIGCVGINALTKAGFDIQAVFTHTDDPNENHFFSSVARLSADLALPVFAPENVNHPLWIERIRELKPDVIFSFYYRDMLSEDILSLASTGAFNLHGSLLPKYRGRAPINWAILNGEVETGVTLHKMVLKPDAGDIIAQYKVAIAETDTALTLHGKIREAAEKLFDQVLPQIKAGIYPAIPQDESQATYFGRRTAVDGEIDWHKSATEINNLVRAVTEPYPGAFTFLGERKITIWRACPLNETHDKQPGTVLSVDPLIIACGKGTLEIINGQSESGLYVQGHRLAVDMSMVTDVRVGPKATTQINHRKRVLILGVNGFIGNHLTERLLRDGNYDIYGMDIGSSAIERFISNPRFHFIEGDINIHTEWIEYHIKKCDVVLPLVAIATPIEYTRNPLRVFELDFEENLKIVRYCVKYNKRIIFPSTSEVYGMCDDKEFDEDDSRLIVGPINKQRWIYSVSKQLLDRVIWAYGEKEGLKFTLFRPFNWMGPRLDNLNSARIGSSRAITQLILNLVEGSPIKLVDGGEQKRCFTDINDGIEALFRIIENREGLCDGQIINIGNPTNEASIRQLAEILLDSFEDHELRDHFPPFAGFKKVESGSYYGKGYQDVEHRKPSIKNAERLLDWKPTIDMKQTINETLDFFLRGAVEELGKN.

Positions Met-1–Val-304 are formyltransferase ArnAFT. Catalysis depends on His-104, which acts as the Proton donor; for formyltransferase activity. (6R)-10-formyltetrahydrofolate-binding positions include Arg-114 and Val-136–Asp-140. A dehydrogenase ArnADH region spans residues His-314–Asn-660. NAD(+) contacts are provided by residues Asp-347 and Asp-368–Ile-369. Residues Ala-393, Tyr-398, and Thr-432–Ser-433 contribute to the UDP-alpha-D-glucuronate site. Catalysis depends on Glu-434, which acts as the Proton acceptor; for decarboxylase activity. Residues Arg-460, Asn-492, Lys-526–Arg-535, and Tyr-613 contribute to the UDP-alpha-D-glucuronate site. The Proton donor; for decarboxylase activity role is filled by Arg-619.

The protein in the N-terminal section; belongs to the Fmt family. UDP-L-Ara4N formyltransferase subfamily. This sequence in the C-terminal section; belongs to the NAD(P)-dependent epimerase/dehydratase family. UDP-glucuronic acid decarboxylase subfamily. Homohexamer, formed by a dimer of trimers.

The enzyme catalyses UDP-alpha-D-glucuronate + NAD(+) = UDP-beta-L-threo-pentopyranos-4-ulose + CO2 + NADH. The catalysed reaction is UDP-4-amino-4-deoxy-beta-L-arabinose + (6R)-10-formyltetrahydrofolate = UDP-4-deoxy-4-formamido-beta-L-arabinose + (6S)-5,6,7,8-tetrahydrofolate + H(+). The protein operates within nucleotide-sugar biosynthesis; UDP-4-deoxy-4-formamido-beta-L-arabinose biosynthesis; UDP-4-deoxy-4-formamido-beta-L-arabinose from UDP-alpha-D-glucuronate: step 1/3. It functions in the pathway nucleotide-sugar biosynthesis; UDP-4-deoxy-4-formamido-beta-L-arabinose biosynthesis; UDP-4-deoxy-4-formamido-beta-L-arabinose from UDP-alpha-D-glucuronate: step 3/3. It participates in bacterial outer membrane biogenesis; lipopolysaccharide biosynthesis. Functionally, bifunctional enzyme that catalyzes the oxidative decarboxylation of UDP-glucuronic acid (UDP-GlcUA) to UDP-4-keto-arabinose (UDP-Ara4O) and the addition of a formyl group to UDP-4-amino-4-deoxy-L-arabinose (UDP-L-Ara4N) to form UDP-L-4-formamido-arabinose (UDP-L-Ara4FN). The modified arabinose is attached to lipid A and is required for resistance to polymyxin and cationic antimicrobial peptides. This is Bifunctional polymyxin resistance protein ArnA from Photorhabdus laumondii subsp. laumondii (strain DSM 15139 / CIP 105565 / TT01) (Photorhabdus luminescens subsp. laumondii).